The primary structure comprises 512 residues: Lysine--tRNA ligase (512 aa).

2 residues coordinate Mg(2+): Glu-422 and Glu-429.

It belongs to the class-II aminoacyl-tRNA synthetase family. As to quaternary structure, homodimer. It depends on Mg(2+) as a cofactor.

Its subcellular location is the cytoplasm. It catalyses the reaction tRNA(Lys) + L-lysine + ATP = L-lysyl-tRNA(Lys) + AMP + diphosphate. In Paraburkholderia phymatum (strain DSM 17167 / CIP 108236 / LMG 21445 / STM815) (Burkholderia phymatum), this protein is Lysine--tRNA ligase.